Reading from the N-terminus, the 85-residue chain is MAHKKAGGSTRNGRDSESKRLGVKRFGGEAVLAGSIIVRQRGTKFHAGINVGCGKDHTLFALADGKVKFEVKGPKNRKFISIEAE.

A disordered region spans residues 1-20 (MAHKKAGGSTRNGRDSESKR).

Belongs to the bacterial ribosomal protein bL27 family.

The protein is Large ribosomal subunit protein bL27 of Yersinia pseudotuberculosis serotype O:1b (strain IP 31758).